The chain runs to 631 residues: Alpha-dioxygenase 2 (631 aa).

The first 20 residues, 1–20 (MGFSPSSSWFLHPQLHHVVS), serve as a signal peptide directing secretion. A heme b-binding site is contributed by H157. Y378 (proton acceptor) is an active-site residue. H381 is a heme b binding site. N583 carries an N-linked (GlcNAc...) asparagine glycan.

This sequence belongs to the peroxidase family. It depends on heme b as a cofactor. In terms of tissue distribution, expressed in seedlings (cotyledons, young leaves, and hypocotyls), flowers, siliques and old leaves.

Functionally, alpha-dioxygenase that catalyzes the primary oxygenation of fatty acids into oxylipins. May be involved in the senescence process. The protein is Alpha-dioxygenase 2 (DOX2) of Arabidopsis thaliana (Mouse-ear cress).